The primary structure comprises 670 residues: MSESVHQRLEELKESLHYHAVRYYVEDNPEIPDAEYDRLMRELLEIEAQHPDLVTVDSPSQRVGGKPLSEFSQVTHEVPMLSLDNAFDDSELDSFHKRAQDRIGGESIKQYCCEPKLDGLAVSLLYENGILVQAATRGDGTTGENITENVRTINAIPLKLRGDDWPARLEVRGEVFMPKAGFEKLNELARQKGEKVFVNPRNAAAGSLRQLDSRITASRPLSFYAYSVGVVQGADLAASHYERFLQIKSWGLPMCPETKRVDSLADVKTYYQHILQRRDALPYEIDGVVIKIDDIAVQERLGFVARAPRWAIAYKFPAQEEITTLNEVEFQVGRTGAITPVAKLEPVFVGGVTVSNATLHNADEIERLQVKIGDQVVIRRAGDVIPQVVSVIKERRPETARDIIFPTQCPVCGSHVERIEGEAVTRCTGGLVCQAQRKQALKHFVSRKALDVDGLGDKVIEQLVDREMVETPADLFKLSAGVLTVLERMGPKSAQNIVNALEKSKLTTLPRFLYSLGIREVGEATAANLAQHFKSLEAIQAATEEQLIAVQDIGVVVAKHITTFFEEEQNQAVVQDLLVQGIHWPEVSAPEQGAELPLEGKTVVLTGTLSQLGRTEAKEALQSLGAKVTGSVSKKTDILFAGENAGSKLAKAQELGIEIKTEQDLLELIN.

Residues 33 to 37 (DAEYD), 82 to 83 (SL), and glutamate 114 each bind NAD(+). Residue lysine 116 is the N6-AMP-lysine intermediate of the active site. Positions 137, 174, 291, and 315 each coordinate NAD(+). The Zn(2+) site is built by cysteine 409, cysteine 412, cysteine 427, and cysteine 433. The 78-residue stretch at 593–670 (GAELPLEGKT…TEQDLLELIN (78 aa)) folds into the BRCT domain.

It belongs to the NAD-dependent DNA ligase family. LigA subfamily. Mg(2+) is required as a cofactor. The cofactor is Mn(2+).

The enzyme catalyses NAD(+) + (deoxyribonucleotide)n-3'-hydroxyl + 5'-phospho-(deoxyribonucleotide)m = (deoxyribonucleotide)n+m + AMP + beta-nicotinamide D-nucleotide.. In terms of biological role, DNA ligase that catalyzes the formation of phosphodiester linkages between 5'-phosphoryl and 3'-hydroxyl groups in double-stranded DNA using NAD as a coenzyme and as the energy source for the reaction. It is essential for DNA replication and repair of damaged DNA. The protein is DNA ligase of Vibrio parahaemolyticus serotype O3:K6 (strain RIMD 2210633).